A 457-amino-acid polypeptide reads, in one-letter code: Argininosuccinate lyase (457 aa).

The protein belongs to the lyase 1 family. Argininosuccinate lyase subfamily.

Its subcellular location is the cytoplasm. The enzyme catalyses 2-(N(omega)-L-arginino)succinate = fumarate + L-arginine. It functions in the pathway amino-acid biosynthesis; L-arginine biosynthesis; L-arginine from L-ornithine and carbamoyl phosphate: step 3/3. The chain is Argininosuccinate lyase from Citrobacter koseri (strain ATCC BAA-895 / CDC 4225-83 / SGSC4696).